The sequence spans 416 residues: Putative cell agglutination protein SPAC1348.08c (416 aa).

The first 27 residues, Met-1–Ala-27, serve as a signal peptide directing secretion. An N-linked (GlcNAc...) asparagine glycan is attached at Asn-19. A run of 2 repeats spans residues Gly-90–Ala-124 and Gly-125–Asn-160. The 2 X 36 AA approximate tandem repeats stretch occupies residues Gly-90–Asn-160. The PA14 domain occupies Phe-224–Tyr-390. N-linked (GlcNAc...) asparagine glycosylation occurs at Asn-344.

It localises to the cell surface. In terms of biological role, may be involved in agglutination during conjugation or other aspects of colony formation. This chain is Putative cell agglutination protein SPAC1348.08c, found in Schizosaccharomyces pombe (strain 972 / ATCC 24843) (Fission yeast).